A 70-amino-acid polypeptide reads, in one-letter code: Small, acid-soluble spore protein I (70 aa).

It belongs to the SspI family.

The protein resides in the spore core. This is Small, acid-soluble spore protein I from Bacillus licheniformis (strain ATCC 14580 / DSM 13 / JCM 2505 / CCUG 7422 / NBRC 12200 / NCIMB 9375 / NCTC 10341 / NRRL NRS-1264 / Gibson 46).